The sequence spans 329 residues: Malate dehydrogenase (329 aa).

12-18 (GAAGQIG) serves as a coordination point for NAD(+). Residues R93 and R99 each coordinate substrate. NAD(+)-binding positions include N106, Q113, and 130 to 132 (TGN). Positions 132 and 163 each coordinate substrate. H188 acts as the Proton acceptor in catalysis.

This sequence belongs to the LDH/MDH superfamily. MDH type 2 family.

It catalyses the reaction (S)-malate + NAD(+) = oxaloacetate + NADH + H(+). Its function is as follows. Catalyzes the reversible oxidation of malate to oxaloacetate. In Mycobacterium ulcerans (strain Agy99), this protein is Malate dehydrogenase.